The chain runs to 177 residues: Ribosome maturation factor RimM (177 aa).

Residues 100-177 enclose the PRC barrel domain; it reads EDEYYWSDLV…TVLVAWPSDY (78 aa).

This sequence belongs to the RimM family. As to quaternary structure, binds ribosomal protein uS19.

It localises to the cytoplasm. Its function is as follows. An accessory protein needed during the final step in the assembly of 30S ribosomal subunit, possibly for assembly of the head region. Essential for efficient processing of 16S rRNA. May be needed both before and after RbfA during the maturation of 16S rRNA. It has affinity for free ribosomal 30S subunits but not for 70S ribosomes. In Psychrobacter arcticus (strain DSM 17307 / VKM B-2377 / 273-4), this protein is Ribosome maturation factor RimM.